We begin with the raw amino-acid sequence, 430 residues long: Asparagine--tRNA ligase (430 aa).

It belongs to the class-II aminoacyl-tRNA synthetase family. Homodimer.

Its subcellular location is the cytoplasm. It catalyses the reaction tRNA(Asn) + L-asparagine + ATP = L-asparaginyl-tRNA(Asn) + AMP + diphosphate + H(+). This chain is Asparagine--tRNA ligase, found in Bacillus velezensis (strain DSM 23117 / BGSC 10A6 / LMG 26770 / FZB42) (Bacillus amyloliquefaciens subsp. plantarum).